We begin with the raw amino-acid sequence, 261 residues long: 1-(5-phosphoribosyl)-5-[(5-phosphoribosylamino)methylideneamino] imidazole-4-carboxamide isomerase (261 aa).

The active-site Proton acceptor is the Asp15. Asp136 functions as the Proton donor in the catalytic mechanism.

This sequence belongs to the HisA/HisF family.

The protein localises to the cytoplasm. It catalyses the reaction 1-(5-phospho-beta-D-ribosyl)-5-[(5-phospho-beta-D-ribosylamino)methylideneamino]imidazole-4-carboxamide = 5-[(5-phospho-1-deoxy-D-ribulos-1-ylimino)methylamino]-1-(5-phospho-beta-D-ribosyl)imidazole-4-carboxamide. It participates in amino-acid biosynthesis; L-histidine biosynthesis; L-histidine from 5-phospho-alpha-D-ribose 1-diphosphate: step 4/9. This is 1-(5-phosphoribosyl)-5-[(5-phosphoribosylamino)methylideneamino] imidazole-4-carboxamide isomerase from Synechococcus sp. (strain JA-2-3B'a(2-13)) (Cyanobacteria bacterium Yellowstone B-Prime).